Here is a 350-residue protein sequence, read N- to C-terminus: Biotin synthase (350 aa).

Residues 54–278 enclose the Radical SAM core domain; that stretch reads REIQLSTLLS…TMPQSYVRLS (225 aa). [4Fe-4S] cluster contacts are provided by cysteine 69, cysteine 73, and cysteine 76. [2Fe-2S] cluster-binding residues include cysteine 113, cysteine 144, cysteine 204, and arginine 276.

It belongs to the radical SAM superfamily. Biotin synthase family. As to quaternary structure, homodimer. [4Fe-4S] cluster serves as cofactor. It depends on [2Fe-2S] cluster as a cofactor.

It carries out the reaction (4R,5S)-dethiobiotin + (sulfur carrier)-SH + 2 reduced [2Fe-2S]-[ferredoxin] + 2 S-adenosyl-L-methionine = (sulfur carrier)-H + biotin + 2 5'-deoxyadenosine + 2 L-methionine + 2 oxidized [2Fe-2S]-[ferredoxin]. Its pathway is cofactor biosynthesis; biotin biosynthesis; biotin from 7,8-diaminononanoate: step 2/2. In terms of biological role, catalyzes the conversion of dethiobiotin (DTB) to biotin by the insertion of a sulfur atom into dethiobiotin via a radical-based mechanism. The polypeptide is Biotin synthase (Neisseria meningitidis serogroup A / serotype 4A (strain DSM 15465 / Z2491)).